A 1154-amino-acid chain; its full sequence is Paired amphipathic helix protein pst3 (1154 aa).

Disordered regions lie at residues 1-71 (MDVM…RSVT) and 91-110 (SGKDGSISSQNAEGLSSSSN). Basic and acidic residues predominate over residues 9 to 27 (DSERDNPGDKVETQSDKNH). Polar residues-rich tracts occupy residues 32–45 (SPSQSQSPVNTSLH) and 100–110 (QNAEGLSSSSN). Positions 111–181 (RPLDVNDALS…EGFNTFLPSG (71 aa)) constitute a PAH 1 domain. Disordered regions lie at residues 199-249 (GTPM…STEN) and 321-376 (DNVD…KTSR). Residues 228–241 (STSPTDSQPQPSAP) show a composition bias toward low complexity. The 71-residue stretch at 252-322 (PRVDFNYAIA…EEFKLFLPDN (71 aa)) folds into the PAH 2 domain. Composition is skewed to polar residues over residues 323–337 (VDSTEPSTPNVQKSP) and 365–376 (AQISRSISKTSR). The PAH 3 domain occupies 403–472 (SPYAATQEEL…LWFSEFIRWS (70 aa)). The segment at 797–824 (NSNNTNVSFQTDETQTEDETMSDIHPDD) is disordered.

Its subcellular location is the nucleus. This Schizosaccharomyces pombe (strain 972 / ATCC 24843) (Fission yeast) protein is Paired amphipathic helix protein pst3 (pst3).